Here is a 566-residue protein sequence, read N- to C-terminus: Bifunctional NADP phosphatase/NAD kinase (566 aa).

Residues 1-283 are NADP phosphatase; it reads MDMLEMALNI…KLVGIFGNRW (283 aa). Mg(2+) is bound by residues Glu66, Asp85, Val87, Asp88, and Asp229. The tract at residues 275-566 is NAD kinase; the sequence is LVGIFGNRWR…YNKLKKLSLM (292 aa). Asp355 serves as the catalytic Proton acceptor. NAD(+) contacts are provided by residues 355 to 356, Arg360, 430 to 431, Lys441, Arg458, Asp460, 471 to 476, and Asn528; these read DG, NE, and TAYSLS.

The protein in the N-terminal section; belongs to the inositol monophosphatase superfamily. This sequence in the C-terminal section; belongs to the NAD kinase family. As to quaternary structure, homotetramer. Mg(2+) is required as a cofactor.

The protein resides in the cytoplasm. It catalyses the reaction NAD(+) + ATP = ADP + NADP(+) + H(+). The enzyme catalyses NADP(+) + H2O = phosphate + NAD(+). Functionally, involved in the regulation of the intracellular balance between NAD(H) and NADP(H), and is a key enzyme in the biosynthesis of NADP. Catalyzes the phosphorylation and dephosphorylation of NAD and NADP, respectively. Although it shows conflicting dual activities and is able to supply NADP, it seems that its physiological role is to prevent excess accumulation of NADP. This Methanococcus maripaludis (strain DSM 14266 / JCM 13030 / NBRC 101832 / S2 / LL) protein is Bifunctional NADP phosphatase/NAD kinase.